Here is a 74-residue protein sequence, read N- to C-terminus: Translation initiation factor IF-1, chloroplastic (74 aa).

An S1-like domain is found at 1-72 (MERQNLIEME…TKGRITYRLR (72 aa)).

It belongs to the IF-1 family. As to quaternary structure, component of the 30S ribosomal translation pre-initiation complex which assembles on the 30S ribosome in the order IF-2 and IF-3, IF-1 and N-formylmethionyl-tRNA(fMet); mRNA recruitment can occur at any time during PIC assembly.

The protein localises to the plastid. It is found in the chloroplast. In terms of biological role, one of the essential components for the initiation of protein synthesis. Stabilizes the binding of IF-2 and IF-3 on the 30S subunit to which N-formylmethionyl-tRNA(fMet) subsequently binds. Helps modulate mRNA selection, yielding the 30S pre-initiation complex (PIC). Upon addition of the 50S ribosomal subunit IF-1, IF-2 and IF-3 are released leaving the mature 70S translation initiation complex. In Mesostigma viride (Green alga), this protein is Translation initiation factor IF-1, chloroplastic.